The sequence spans 274 residues: tRNA-cytidine(32) 2-sulfurtransferase (274 aa).

The PP-loop motif signature appears at Ser-40 to Ser-45. Residues Cys-115, Cys-118, and Cys-206 each coordinate [4Fe-4S] cluster.

Belongs to the TtcA family. In terms of assembly, homodimer. Mg(2+) is required as a cofactor. The cofactor is [4Fe-4S] cluster.

It is found in the cytoplasm. It catalyses the reaction cytidine(32) in tRNA + S-sulfanyl-L-cysteinyl-[cysteine desulfurase] + AH2 + ATP = 2-thiocytidine(32) in tRNA + L-cysteinyl-[cysteine desulfurase] + A + AMP + diphosphate + H(+). The protein operates within tRNA modification. Catalyzes the ATP-dependent 2-thiolation of cytidine in position 32 of tRNA, to form 2-thiocytidine (s(2)C32). The sulfur atoms are provided by the cysteine/cysteine desulfurase (IscS) system. In Azotobacter vinelandii (strain DJ / ATCC BAA-1303), this protein is tRNA-cytidine(32) 2-sulfurtransferase.